Here is a 209-residue protein sequence, read N- to C-terminus: NADH-quinone oxidoreductase subunit C (209 aa).

Belongs to the complex I 30 kDa subunit family. As to quaternary structure, NDH-1 is composed of 14 different subunits. Subunits NuoB, C, D, E, F, and G constitute the peripheral sector of the complex.

It localises to the cell inner membrane. It catalyses the reaction a quinone + NADH + 5 H(+)(in) = a quinol + NAD(+) + 4 H(+)(out). Functionally, NDH-1 shuttles electrons from NADH, via FMN and iron-sulfur (Fe-S) centers, to quinones in the respiratory chain. The immediate electron acceptor for the enzyme in this species is believed to be ubiquinone. Couples the redox reaction to proton translocation (for every two electrons transferred, four hydrogen ions are translocated across the cytoplasmic membrane), and thus conserves the redox energy in a proton gradient. The polypeptide is NADH-quinone oxidoreductase subunit C (Xanthobacter autotrophicus (strain ATCC BAA-1158 / Py2)).